The sequence spans 268 residues: 4-hydroxy-tetrahydrodipicolinate reductase (268 aa).

Residues G10–M15 and D36 contribute to the NAD(+) site. R37 is a binding site for NADP(+). NAD(+)-binding positions include G99–T101 and S123–M126. The active-site Proton donor/acceptor is H156. Residue H157 participates in (S)-2,3,4,5-tetrahydrodipicolinate binding. K160 serves as the catalytic Proton donor. Residue G166–T167 coordinates (S)-2,3,4,5-tetrahydrodipicolinate.

It belongs to the DapB family.

Its subcellular location is the cytoplasm. It catalyses the reaction (S)-2,3,4,5-tetrahydrodipicolinate + NAD(+) + H2O = (2S,4S)-4-hydroxy-2,3,4,5-tetrahydrodipicolinate + NADH + H(+). The catalysed reaction is (S)-2,3,4,5-tetrahydrodipicolinate + NADP(+) + H2O = (2S,4S)-4-hydroxy-2,3,4,5-tetrahydrodipicolinate + NADPH + H(+). It functions in the pathway amino-acid biosynthesis; L-lysine biosynthesis via DAP pathway; (S)-tetrahydrodipicolinate from L-aspartate: step 4/4. Functionally, catalyzes the conversion of 4-hydroxy-tetrahydrodipicolinate (HTPA) to tetrahydrodipicolinate. This is 4-hydroxy-tetrahydrodipicolinate reductase from Burkholderia pseudomallei (strain 1710b).